A 117-amino-acid polypeptide reads, in one-letter code: UPF0342 protein OB1136 (117 aa).

Belongs to the UPF0342 family.

The chain is UPF0342 protein OB1136 from Oceanobacillus iheyensis (strain DSM 14371 / CIP 107618 / JCM 11309 / KCTC 3954 / HTE831).